Consider the following 472-residue polypeptide: Bifunctional protein HldE (472 aa).

The tract at residues 1–315 (MAKRVKILVV…QLLNSSFGAN (315 aa)) is ribokinase. 192–195 (NKKE) provides a ligand contact to ATP. D260 is an active-site residue. The segment at 340 to 472 (FTNGCFDILH…IKDAKNDDKK (133 aa)) is cytidylyltransferase.

In the N-terminal section; belongs to the carbohydrate kinase PfkB family. It in the C-terminal section; belongs to the cytidylyltransferase family. In terms of assembly, homodimer.

It catalyses the reaction D-glycero-beta-D-manno-heptose 7-phosphate + ATP = D-glycero-beta-D-manno-heptose 1,7-bisphosphate + ADP + H(+). The enzyme catalyses D-glycero-beta-D-manno-heptose 1-phosphate + ATP + H(+) = ADP-D-glycero-beta-D-manno-heptose + diphosphate. The protein operates within nucleotide-sugar biosynthesis; ADP-L-glycero-beta-D-manno-heptose biosynthesis; ADP-L-glycero-beta-D-manno-heptose from D-glycero-beta-D-manno-heptose 7-phosphate: step 1/4. It functions in the pathway nucleotide-sugar biosynthesis; ADP-L-glycero-beta-D-manno-heptose biosynthesis; ADP-L-glycero-beta-D-manno-heptose from D-glycero-beta-D-manno-heptose 7-phosphate: step 3/4. Functionally, catalyzes the phosphorylation of D-glycero-D-manno-heptose 7-phosphate at the C-1 position to selectively form D-glycero-beta-D-manno-heptose-1,7-bisphosphate. In terms of biological role, catalyzes the ADP transfer from ATP to D-glycero-beta-D-manno-heptose 1-phosphate, yielding ADP-D-glycero-beta-D-manno-heptose. The protein is Bifunctional protein HldE of Campylobacter concisus (strain 13826).